A 297-amino-acid chain; its full sequence is Protoheme IX farnesyltransferase (297 aa).

The next 9 helical transmembrane spans lie at 26–46 (VTQL…PGMV), 48–68 (YPVL…AFAV), 96–116 (LHII…LWNF), 120–140 (LTMW…TWLL), 147–167 (NIVI…AAVT), 174–194 (AWHL…ALAL), 218–238 (LLNI…PYIY), 245–265 (YLIS…ALFI), and 276–296 (FRFS…DHYF).

This sequence belongs to the UbiA prenyltransferase family. Protoheme IX farnesyltransferase subfamily.

It localises to the cell inner membrane. The catalysed reaction is heme b + (2E,6E)-farnesyl diphosphate + H2O = Fe(II)-heme o + diphosphate. Its pathway is porphyrin-containing compound metabolism; heme O biosynthesis; heme O from protoheme: step 1/1. Its function is as follows. Converts heme B (protoheme IX) to heme O by substitution of the vinyl group on carbon 2 of heme B porphyrin ring with a hydroxyethyl farnesyl side group. In Polynucleobacter necessarius subsp. necessarius (strain STIR1), this protein is Protoheme IX farnesyltransferase.